The chain runs to 482 residues: NADH-quinone oxidoreductase subunit N (482 aa).

Helical transmembrane passes span Ala-10–Tyr-30, Val-44–Ala-64, Gly-77–Ala-97, Ile-113–Gly-133, Phe-166–Phe-186, Leu-206–Val-226, Val-243–Gly-265, Ile-277–Gln-296, Leu-302–Thr-322, Gly-328–Leu-348, Ala-374–Phe-394, Phe-397–Val-417, and Ile-451–Val-471.

The protein belongs to the complex I subunit 2 family. As to quaternary structure, NDH-1 is composed of 14 different subunits. Subunits NuoA, H, J, K, L, M, N constitute the membrane sector of the complex.

Its subcellular location is the cell inner membrane. It carries out the reaction a quinone + NADH + 5 H(+)(in) = a quinol + NAD(+) + 4 H(+)(out). In terms of biological role, NDH-1 shuttles electrons from NADH, via FMN and iron-sulfur (Fe-S) centers, to quinones in the respiratory chain. The immediate electron acceptor for the enzyme in this species is believed to be ubiquinone. Couples the redox reaction to proton translocation (for every two electrons transferred, four hydrogen ions are translocated across the cytoplasmic membrane), and thus conserves the redox energy in a proton gradient. The chain is NADH-quinone oxidoreductase subunit N from Methylobacterium nodulans (strain LMG 21967 / CNCM I-2342 / ORS 2060).